We begin with the raw amino-acid sequence, 192 residues long: Probable nicotinate-nucleotide adenylyltransferase (192 aa).

It belongs to the NadD family.

It carries out the reaction nicotinate beta-D-ribonucleotide + ATP + H(+) = deamido-NAD(+) + diphosphate. It functions in the pathway cofactor biosynthesis; NAD(+) biosynthesis; deamido-NAD(+) from nicotinate D-ribonucleotide: step 1/1. Functionally, catalyzes the reversible adenylation of nicotinate mononucleotide (NaMN) to nicotinic acid adenine dinucleotide (NaAD). The chain is Probable nicotinate-nucleotide adenylyltransferase from Bradyrhizobium sp. (strain BTAi1 / ATCC BAA-1182).